A 365-amino-acid polypeptide reads, in one-letter code: Chaperone protein DnaJ (365 aa).

The region spanning 5–71 (DFYEILGIAK…QKRQAYDQFG (67 aa)) is the J domain. The CR-type zinc-finger motif lies at 128–206 (GTTVKIRIPK…CHGKGVVHKQ (79 aa)). Zn(2+) contacts are provided by Cys-141, Cys-144, Cys-158, Cys-161, Cys-180, Cys-183, Cys-194, and Cys-197. 4 CXXCXGXG motif repeats span residues 141–148 (CDTCSGTG), 158–165 (CLTCGGAG), 180–187 (CNACSGTG), and 194–201 (CNNCHGKG).

This sequence belongs to the DnaJ family. In terms of assembly, homodimer. Requires Zn(2+) as cofactor.

The protein resides in the cytoplasm. In terms of biological role, participates actively in the response to hyperosmotic and heat shock by preventing the aggregation of stress-denatured proteins and by disaggregating proteins, also in an autonomous, DnaK-independent fashion. Unfolded proteins bind initially to DnaJ; upon interaction with the DnaJ-bound protein, DnaK hydrolyzes its bound ATP, resulting in the formation of a stable complex. GrpE releases ADP from DnaK; ATP binding to DnaK triggers the release of the substrate protein, thus completing the reaction cycle. Several rounds of ATP-dependent interactions between DnaJ, DnaK and GrpE are required for fully efficient folding. Also involved, together with DnaK and GrpE, in the DNA replication of plasmids through activation of initiation proteins. In Vesicomyosocius okutanii subsp. Calyptogena okutanii (strain HA), this protein is Chaperone protein DnaJ.